A 1046-amino-acid chain; its full sequence is Hemoglobin-haptoglobin-binding protein A (1046 aa).

An N-terminal signal peptide occupies residues 1–24; it reads MTNFRLNLLAYSVMLGLTAGVAYA. 4 consecutive repeat copies span residues 26 to 29, 30 to 33, 34 to 37, and 38 to 41. Residues 26–41 form a 4 X 4 AA tandem repeats of Q-P-T-N region; that stretch reads QPTNQPTNQPTNQPTN. The short motif at 51-58 is the TonB box element; that stretch reads EQINVLGS. Positions 61–188 constitute a TBDR plug domain; it reads HNDNTPPKIA…LGGSVSFDTK (128 aa). The TBDR beta-barrel domain occupies 196 to 1046; sequence NKNYYASYKR…NYRMSVQFEF (851 aa). The TonB C-terminal box motif lies at 1029–1046; the sequence is NRFYAPGRNYRMSVQFEF.

Belongs to the TonB-dependent receptor family. Hemoglobin/haptoglobin binding protein subfamily.

The protein resides in the cell outer membrane. Functionally, acts as a receptor for the hemoglobin/haptoglobin complex of the human host and is required for heme uptake. Does not bind hemoglobin alone. The polypeptide is Hemoglobin-haptoglobin-binding protein A (hhuA) (Haemophilus influenzae).